Reading from the N-terminus, the 472-residue chain is DNA-cytosine methyltransferase (472 aa).

The 371-residue stretch at 87 to 457 (FRFIDLFAGI…KLLEPKIKQA (371 aa)) folds into the SAM-dependent MTase C5-type domain. The active site involves Cys-177.

The protein belongs to the class I-like SAM-binding methyltransferase superfamily. C5-methyltransferase family.

The catalysed reaction is a 2'-deoxycytidine in DNA + S-adenosyl-L-methionine = a 5-methyl-2'-deoxycytidine in DNA + S-adenosyl-L-homocysteine + H(+). In terms of biological role, this methylase recognizes the double-stranded sequence 5'-CCWGG-3', methylates C-2 on both strands. The chain is DNA-cytosine methyltransferase (dcm) from Escherichia coli O157:H7.